The chain runs to 1063 residues: ATP-dependent helicase hrq1 (1063 aa).

The tract at residues threonine 224–serine 243 is disordered. The 184-residue stretch at isoleucine 320–leucine 503 folds into the Helicase ATP-binding domain. Threonine 333 to serine 340 provides a ligand contact to ATP. Positions aspartate 444 to histidine 447 match the DEAH box motif. The region spanning glutamate 539–glutamate 717 is the Helicase C-terminal domain.

The protein belongs to the helicase family. HRQ1 subfamily. Forms heptamer rings. Interacts with rhp14. Mg(2+) serves as cofactor.

The protein localises to the nucleus. The enzyme catalyses Couples ATP hydrolysis with the unwinding of duplex DNA by translocating in the 3'-5' direction.. It catalyses the reaction ATP + H2O = ADP + phosphate + H(+). In terms of biological role, helicase with 3'-5' helicase activity involved in genome stability. Functions in the nucleotide excision repair (NER) pathway and plays a critical role in DNA interstrand cross-link repair. Unwinds relatively long duplex DNA up to 120-bp and requires a long 3'-tail of at least 70 nucleotides for efficient unwinding of duplex DNA. Shows both processive helicase and DNA strand annealing activities. Affects telomere length by a non-catalytic mechanism, probably through inhibiting telomerase by competing with it for ssDNA binding. The protein is ATP-dependent helicase hrq1 of Schizosaccharomyces pombe (strain 972 / ATCC 24843) (Fission yeast).